We begin with the raw amino-acid sequence, 210 residues long: MMTNFKFALKNLKVNFTSENIDKLRFYIEKVLLFSDRFNLVSNNVRNFDAMLLHALDSVSGLPIVKDKNPRQVLDVGSGAGFPGIVLALFDRCRKYVLLERSNKKAIFLKMISLELGLENVEVLEHNVEEEQNKYEFITIRAFGDIRKYANILGSILKSGGLIMAYKGKFDKVEFEMSYVKNLFDKVEIKSSELISDKERYFLLLYDYKC.

Residues Gly-77, Phe-82, 100-102 (ERS), 128-129 (VE), and Arg-141 each bind S-adenosyl-L-methionine.

This sequence belongs to the methyltransferase superfamily. RNA methyltransferase RsmG family.

The protein localises to the cytoplasm. In terms of biological role, specifically methylates the N7 position of a guanine in 16S rRNA. This chain is Ribosomal RNA small subunit methyltransferase G, found in Borrelia duttonii (strain Ly).